A 243-amino-acid polypeptide reads, in one-letter code: MLIIPAIDLKDGKCVRLKQGRMEDDTVFSDDPVATAQHWVNEGARRLHLVDLNGAFAGTPIHKPVVEAIAKAQPELPIQIGGGIRSLETIEHYLEAGVTFVIIGTKAVQEPEFVEEACKRFAGHIIVGIDAMNGMVATDGWANVTDVKATDLAKRFADAGVSSIVYTDIARDGMMQGVNVEQTVNLAQYSGLPVIASGGVTNLDDVRNLKGQPGILGAITGRAIYEGTLNLREAQLLLDENRL.

D8 (proton acceptor) is an active-site residue. D130 acts as the Proton donor in catalysis.

Belongs to the HisA/HisF family.

The protein resides in the cytoplasm. It catalyses the reaction 1-(5-phospho-beta-D-ribosyl)-5-[(5-phospho-beta-D-ribosylamino)methylideneamino]imidazole-4-carboxamide = 5-[(5-phospho-1-deoxy-D-ribulos-1-ylimino)methylamino]-1-(5-phospho-beta-D-ribosyl)imidazole-4-carboxamide. The protein operates within amino-acid biosynthesis; L-histidine biosynthesis; L-histidine from 5-phospho-alpha-D-ribose 1-diphosphate: step 4/9. In Acinetobacter baumannii (strain AB307-0294), this protein is 1-(5-phosphoribosyl)-5-[(5-phosphoribosylamino)methylideneamino] imidazole-4-carboxamide isomerase.